Reading from the N-terminus, the 158-residue chain is MSDTMQSLDQLSALKTAESEAPKHTKKIDKYGRAYATGKRKDAVARVWIKPGAGKILVNAREVEVYFARPVLRMMIQQPLVAAARAGQYDVVCTVAGGGLSGQAGAVRHGLSKALTNFEPELRGVLKKGGFLTRDSRVVERKKYGKAKARRSFQFSKR.

This sequence belongs to the universal ribosomal protein uS9 family.

The chain is Small ribosomal subunit protein uS9 from Nitrobacter hamburgensis (strain DSM 10229 / NCIMB 13809 / X14).